We begin with the raw amino-acid sequence, 468 residues long: Squamosa promoter-binding-like protein 5 (468 aa).

The SBP-type zinc-finger motif lies at 204 to 281 (PPRCQAEGCK…TEHNRRRRKP (78 aa)). Zn(2+) is bound by residues Cys207, Cys212, Cys229, His232, Cys248, Cys251, His255, and Cys267. The Bipartite nuclear localization signal signature appears at 264–280 (KRSCRKRLTEHNRRRRK). 3 disordered regions span residues 270–305 (RLTE…DASI), 354–374 (TLSL…DGGL), and 405–458 (HHHL…SNNN). A compositionally biased stretch (acidic residues) spans 363–372 (QEEDDEDEDG). Residues 438 to 458 (NNNNILSCSSASDQQNSSNNN) show a composition bias toward low complexity.

In terms of tissue distribution, ubiquitous.

It is found in the nucleus. In terms of biological role, trans-acting factor that binds specifically to the consensus nucleotide sequence 5'-TNCGTACAA-3'. The polypeptide is Squamosa promoter-binding-like protein 5 (SPL5) (Oryza sativa subsp. japonica (Rice)).